Reading from the N-terminus, the 299-residue chain is Oxygen-dependent coproporphyrinogen-III oxidase (299 aa).

S92 serves as a coordination point for substrate. A divalent metal cation is bound by residues H96 and H106. Residue H106 is the Proton donor of the active site. Substrate is bound at residue 108 to 110 (NVR). H145 and H175 together coordinate a divalent metal cation. Positions 240–275 (YVEFNLVWDRGTLFGLQTGGRTESILMSMPPLVRWE) are important for dimerization. 258-260 (GGR) contributes to the substrate binding site.

This sequence belongs to the aerobic coproporphyrinogen-III oxidase family. As to quaternary structure, homodimer. The cofactor is a divalent metal cation.

It is found in the cytoplasm. The enzyme catalyses coproporphyrinogen III + O2 + 2 H(+) = protoporphyrinogen IX + 2 CO2 + 2 H2O. It participates in porphyrin-containing compound metabolism; protoporphyrin-IX biosynthesis; protoporphyrinogen-IX from coproporphyrinogen-III (O2 route): step 1/1. Involved in the heme biosynthesis. Catalyzes the aerobic oxidative decarboxylation of propionate groups of rings A and B of coproporphyrinogen-III to yield the vinyl groups in protoporphyrinogen-IX. The sequence is that of Oxygen-dependent coproporphyrinogen-III oxidase from Enterobacter sp. (strain 638).